The primary structure comprises 352 residues: tRNA N6-adenosine threonylcarbamoyltransferase (352 aa).

Residues H115 and H119 each coordinate Fe cation. Residues 138-142 (LVSGG), D171, G184, and N277 contribute to the substrate site. D305 lines the Fe cation pocket.

The protein belongs to the KAE1 / TsaD family. It depends on Fe(2+) as a cofactor.

It localises to the cytoplasm. The enzyme catalyses L-threonylcarbamoyladenylate + adenosine(37) in tRNA = N(6)-L-threonylcarbamoyladenosine(37) in tRNA + AMP + H(+). Functionally, required for the formation of a threonylcarbamoyl group on adenosine at position 37 (t(6)A37) in tRNAs that read codons beginning with adenine. Is involved in the transfer of the threonylcarbamoyl moiety of threonylcarbamoyl-AMP (TC-AMP) to the N6 group of A37, together with TsaE and TsaB. TsaD likely plays a direct catalytic role in this reaction. This is tRNA N6-adenosine threonylcarbamoyltransferase from Variovorax paradoxus (strain S110).